A 369-amino-acid polypeptide reads, in one-letter code: Protein FAM187B (369 aa).

A signal peptide spans 1-17; that stretch reads MPPMLWLLLNFAAPALG. At 18–333 the chain is on the extracellular side; the sequence is FYFSISCPSG…PGRADSVLKG (316 aa). Asparagine 45, asparagine 68, and asparagine 130 each carry an N-linked (GlcNAc...) asparagine glycan. A helical transmembrane segment spans residues 334–354; it reads LKLVLLVGTVLVLLGALLKFI. Over 355–369 the chain is Cytoplasmic; that stretch reads RPSPGKRSKQVLMVK.

The protein belongs to the FAM187 family.

The protein resides in the membrane. In Macaca fascicularis (Crab-eating macaque), this protein is Protein FAM187B (FAM187B).